The sequence spans 127 residues: MFRTMLGGKIHRATVTEADLNYVGSITVDQDLLDAAGIYPNEKVAIVNNNNGERFETYTIAGKRGSGVICLNGAAARLVQKGDIVIIMSYVQLSEPEIAAHEPKVVLVDGNNKIRDIISYEPPHTVL.

Ser25 serves as the catalytic Schiff-base intermediate with substrate; via pyruvic acid. The residue at position 25 (Ser25) is a Pyruvic acid (Ser). Thr57 is a substrate binding site. Tyr58 functions as the Proton donor in the catalytic mechanism. 73 to 75 (GAA) provides a ligand contact to substrate.

It belongs to the PanD family. Heterooctamer of four alpha and four beta subunits. Requires pyruvate as cofactor. Post-translationally, is synthesized initially as an inactive proenzyme, which is activated by self-cleavage at a specific serine bond to produce a beta-subunit with a hydroxyl group at its C-terminus and an alpha-subunit with a pyruvoyl group at its N-terminus.

Its subcellular location is the cytoplasm. It carries out the reaction L-aspartate + H(+) = beta-alanine + CO2. It participates in cofactor biosynthesis; (R)-pantothenate biosynthesis; beta-alanine from L-aspartate: step 1/1. Catalyzes the pyruvoyl-dependent decarboxylation of aspartate to produce beta-alanine. This Neisseria meningitidis serogroup B (strain ATCC BAA-335 / MC58) protein is Aspartate 1-decarboxylase.